A 232-amino-acid chain; its full sequence is 5'-methylthioadenosine/S-adenosylhomocysteine nucleosidase (232 aa).

E12 functions as the Proton acceptor in the catalytic mechanism. Substrate contacts are provided by residues G78, I152, and 173-174 (ME). The Proton donor role is filled by D197.

Belongs to the PNP/UDP phosphorylase family. MtnN subfamily. In terms of assembly, homodimer.

It catalyses the reaction S-adenosyl-L-homocysteine + H2O = S-(5-deoxy-D-ribos-5-yl)-L-homocysteine + adenine. The enzyme catalyses S-methyl-5'-thioadenosine + H2O = 5-(methylsulfanyl)-D-ribose + adenine. It carries out the reaction 5'-deoxyadenosine + H2O = 5-deoxy-D-ribose + adenine. Its pathway is amino-acid biosynthesis; L-methionine biosynthesis via salvage pathway; S-methyl-5-thio-alpha-D-ribose 1-phosphate from S-methyl-5'-thioadenosine (hydrolase route): step 1/2. In terms of biological role, catalyzes the irreversible cleavage of the glycosidic bond in both 5'-methylthioadenosine (MTA) and S-adenosylhomocysteine (SAH/AdoHcy) to adenine and the corresponding thioribose, 5'-methylthioribose and S-ribosylhomocysteine, respectively. Also cleaves 5'-deoxyadenosine, a toxic by-product of radical S-adenosylmethionine (SAM) enzymes, into 5-deoxyribose and adenine. Thus, is required for in vivo function of the radical SAM enzymes biotin synthase and lipoic acid synthase, that are inhibited by 5'-deoxyadenosine accumulation. This Salmonella paratyphi A (strain ATCC 9150 / SARB42) protein is 5'-methylthioadenosine/S-adenosylhomocysteine nucleosidase.